We begin with the raw amino-acid sequence, 502 residues long: NAD(P)H-quinone oxidoreductase chain 4, chloroplastic (502 aa).

Helical transmembrane passes span 4-24, 39-59, 89-109, 115-132, 136-156, 169-189, 209-229, 244-264, 276-296, 315-335, 387-407, 418-438, and 466-486; these read YPWL…IPLL, LGIC…HFDI, IGLT…AWPV, LFHS…GLFT, ILLF…LLSM, FILY…TMGL, IALE…KLPI, HYST…YGLI, SIFA…AASI, MGFV…GAIL, SLAL…PGIV, IIIT…LLSM, and IFIS…PNLI.

The protein belongs to the complex I subunit 4 family.

Its subcellular location is the plastid. It is found in the chloroplast thylakoid membrane. It carries out the reaction a plastoquinone + NADH + (n+1) H(+)(in) = a plastoquinol + NAD(+) + n H(+)(out). It catalyses the reaction a plastoquinone + NADPH + (n+1) H(+)(in) = a plastoquinol + NADP(+) + n H(+)(out). The polypeptide is NAD(P)H-quinone oxidoreductase chain 4, chloroplastic (Huperzia lucidula (Shining clubmoss)).